The following is a 103-amino-acid chain: 6-pyruvoyl tetrahydrobiopterin synthase (103 aa).

The residue at position 1 (Ala1) is an N-acetylalanine. His27 is a Zn(2+) binding site. Active-site charge relay system residues include His53 and Glu92.

It belongs to the PTPS family. In terms of assembly, homohexamer formed of two homotrimers in a head to head fashion. The cofactor is Zn(2+).

The catalysed reaction is 7,8-dihydroneopterin 3'-triphosphate = 6-pyruvoyl-5,6,7,8-tetrahydropterin + triphosphate + H(+). The protein operates within cofactor biosynthesis; tetrahydrobiopterin biosynthesis; tetrahydrobiopterin from 7,8-dihydroneopterin triphosphate: step 1/3. Involved in the biosynthesis of tetrahydrobiopterin, an essential cofactor of aromatic amino acid hydroxylases. Catalyzes the transformation of 7,8-dihydroneopterin triphosphate into 6-pyruvoyl tetrahydropterin. The sequence is that of 6-pyruvoyl tetrahydrobiopterin synthase (pts) from Salmo salar (Atlantic salmon).